Here is a 373-residue protein sequence, read N- to C-terminus: Dual-specificity RNA methyltransferase RlmN (373 aa).

Glu-94 (proton acceptor) is an active-site residue. One can recognise a Radical SAM core domain in the interval 100 to 339 (EDDRATLCVS…VIVRKTRGDD (240 aa)). The cysteines at positions 107 and 344 are disulfide-linked. Residues Cys-114, Cys-118, and Cys-121 each contribute to the [4Fe-4S] cluster site. Residues 168–169 (GE), Ser-200, 222–224 (SIH), and Asn-301 each bind S-adenosyl-L-methionine. Cys-344 (S-methylcysteine intermediate) is an active-site residue.

It belongs to the radical SAM superfamily. RlmN family. [4Fe-4S] cluster serves as cofactor.

The protein localises to the cytoplasm. It carries out the reaction adenosine(2503) in 23S rRNA + 2 reduced [2Fe-2S]-[ferredoxin] + 2 S-adenosyl-L-methionine = 2-methyladenosine(2503) in 23S rRNA + 5'-deoxyadenosine + L-methionine + 2 oxidized [2Fe-2S]-[ferredoxin] + S-adenosyl-L-homocysteine. The enzyme catalyses adenosine(37) in tRNA + 2 reduced [2Fe-2S]-[ferredoxin] + 2 S-adenosyl-L-methionine = 2-methyladenosine(37) in tRNA + 5'-deoxyadenosine + L-methionine + 2 oxidized [2Fe-2S]-[ferredoxin] + S-adenosyl-L-homocysteine. Functionally, specifically methylates position 2 of adenine 2503 in 23S rRNA and position 2 of adenine 37 in tRNAs. m2A2503 modification seems to play a crucial role in the proofreading step occurring at the peptidyl transferase center and thus would serve to optimize ribosomal fidelity. The protein is Dual-specificity RNA methyltransferase RlmN of Shewanella putrefaciens (strain CN-32 / ATCC BAA-453).